We begin with the raw amino-acid sequence, 874 residues long: Bifunctional uridylyltransferase/uridylyl-removing enzyme (874 aa).

The segment at 1-336 is uridylyltransferase; it reads MIDTSTITNP…DNGKTVETIQ (336 aa). The interval 337-695 is uridylyl-removing; the sequence is LSDDFQIRGH…LSKKATRGGT (359 aa). One can recognise an HD domain in the interval 455–577; the sequence is VDEHSVRLIK…VRDEERLDYL (123 aa). ACT domains lie at 696–779 and 802–874; these read EVFV…RAPR and TMEL…TPQD.

It belongs to the GlnD family. Mg(2+) is required as a cofactor.

The enzyme catalyses [protein-PII]-L-tyrosine + UTP = [protein-PII]-uridylyl-L-tyrosine + diphosphate. It carries out the reaction [protein-PII]-uridylyl-L-tyrosine + H2O = [protein-PII]-L-tyrosine + UMP + H(+). With respect to regulation, uridylyltransferase (UTase) activity is inhibited by glutamine, while glutamine activates uridylyl-removing (UR) activity. Functionally, modifies, by uridylylation and deuridylylation, the PII regulatory proteins (GlnB and homologs), in response to the nitrogen status of the cell that GlnD senses through the glutamine level. Under low glutamine levels, catalyzes the conversion of the PII proteins and UTP to PII-UMP and PPi, while under higher glutamine levels, GlnD hydrolyzes PII-UMP to PII and UMP (deuridylylation). Thus, controls uridylylation state and activity of the PII proteins, and plays an important role in the regulation of nitrogen assimilation and metabolism. The protein is Bifunctional uridylyltransferase/uridylyl-removing enzyme of Photobacterium profundum (strain SS9).